We begin with the raw amino-acid sequence, 160 residues long: MPRKGPVPPREIPPDPKYGDVLVQKLINKVMKDGKKSVAEWIVYTALEEAAKEVNMHPVELLHKVIEKLKPEWEVRPRRVGGATYQVPIEVPERRQISLAIKWLVQAARERPRGRGQYTMIERLKAELLDALNERGGAYKKKEETHRMAHANMVFSHFRW.

This sequence belongs to the universal ribosomal protein uS7 family. Part of the 30S ribosomal subunit. Contacts proteins S9 and S11.

In terms of biological role, one of the primary rRNA binding proteins, it binds directly to 16S rRNA where it nucleates assembly of the head domain of the 30S subunit. Is located at the subunit interface close to the decoding center, probably blocks exit of the E-site tRNA. This chain is Small ribosomal subunit protein uS7B, found in Aquifex aeolicus (strain VF5).